A 317-amino-acid polypeptide reads, in one-letter code: Probable cell division protein WhiA (317 aa).

Residues 281–314 constitute a DNA-binding region (H-T-H motif); that stretch reads SLKELGQMLDPPVGKSGINHRLRRIEKIAEELRK.

This sequence belongs to the WhiA family.

Its function is as follows. Involved in cell division and chromosome segregation. This is Probable cell division protein WhiA from Clostridium novyi (strain NT).